A 209-amino-acid polypeptide reads, in one-letter code: Potassium-transporting ATPase KdpC subunit (209 aa).

A helical membrane pass occupies residues 10–30 (VISLVFLFVLGFLFPTVTSLI).

The protein belongs to the KdpC family. As to quaternary structure, the system is composed of three essential subunits: KdpA, KdpB and KdpC.

The protein resides in the cell membrane. Part of the high-affinity ATP-driven potassium transport (or Kdp) system, which catalyzes the hydrolysis of ATP coupled with the electrogenic transport of potassium into the cytoplasm. This subunit acts as a catalytic chaperone that increases the ATP-binding affinity of the ATP-hydrolyzing subunit KdpB by the formation of a transient KdpB/KdpC/ATP ternary complex. The protein is Potassium-transporting ATPase KdpC subunit of Thermoplasma volcanium (strain ATCC 51530 / DSM 4299 / JCM 9571 / NBRC 15438 / GSS1).